The sequence spans 92 residues: Sec-independent protein translocase protein TatA (92 aa).

Residues 2–22 traverse the membrane as a helical segment; the sequence is IPANFGGTELIILLVIILLLF. A disordered region spans residues 43-92; that stretch reads KGTSGAYEELEEKKGEEEKDEGGKKEAEASGRGEEEQQARAAGEAGRKQG. Positions 53 to 80 are enriched in basic and acidic residues; sequence EEKKGEEEKDEGGKKEAEASGRGEEEQQ.

The protein belongs to the TatA/E family. In terms of assembly, the Tat system comprises two distinct complexes: a TatABC complex, containing multiple copies of TatA, TatB and TatC subunits, and a separate TatA complex, containing only TatA subunits. Substrates initially bind to the TatABC complex, which probably triggers association of the separate TatA complex to form the active translocon.

It is found in the cell membrane. In terms of biological role, part of the twin-arginine translocation (Tat) system that transports large folded proteins containing a characteristic twin-arginine motif in their signal peptide across membranes. TatA could form the protein-conducting channel of the Tat system. The protein is Sec-independent protein translocase protein TatA of Rubrobacter xylanophilus (strain DSM 9941 / JCM 11954 / NBRC 16129 / PRD-1).